The sequence spans 610 residues: Elongation factor 4 (610 aa).

Residues 13 to 195 enclose the tr-type G domain; that stretch reads SHIRNFSIVA…AIVRKLPAPK (183 aa). GTP is bound by residues 25 to 30 and 142 to 145; these read DHGKST and NKID.

It belongs to the TRAFAC class translation factor GTPase superfamily. Classic translation factor GTPase family. LepA subfamily.

It localises to the cell inner membrane. It catalyses the reaction GTP + H2O = GDP + phosphate + H(+). Functionally, required for accurate and efficient protein synthesis under certain stress conditions. May act as a fidelity factor of the translation reaction, by catalyzing a one-codon backward translocation of tRNAs on improperly translocated ribosomes. Back-translocation proceeds from a post-translocation (POST) complex to a pre-translocation (PRE) complex, thus giving elongation factor G a second chance to translocate the tRNAs correctly. Binds to ribosomes in a GTP-dependent manner. This is Elongation factor 4 from Rhizobium etli (strain CIAT 652).